A 205-amino-acid chain; its full sequence is Holliday junction branch migration complex subunit RuvA (205 aa).

The segment at 1-64 (MIGKLKGVVD…EDMIRLYGFR (64 aa)) is domain I. The segment at 65-143 (SDAEREWFRL…AFAPVDPALI (79 aa)) is domain II. A flexible linker region spans residues 144-152 (RLAGAVEER). The interval 153 to 205 (TAPQPVADAISALVNLGYPQIQASAAVAAALQGAGEGAEAKTLIRLGLRELAR) is domain III.

This sequence belongs to the RuvA family. Homotetramer. Forms an RuvA(8)-RuvB(12)-Holliday junction (HJ) complex. HJ DNA is sandwiched between 2 RuvA tetramers; dsDNA enters through RuvA and exits via RuvB. An RuvB hexamer assembles on each DNA strand where it exits the tetramer. Each RuvB hexamer is contacted by two RuvA subunits (via domain III) on 2 adjacent RuvB subunits; this complex drives branch migration. In the full resolvosome a probable DNA-RuvA(4)-RuvB(12)-RuvC(2) complex forms which resolves the HJ.

The protein resides in the cytoplasm. In terms of biological role, the RuvA-RuvB-RuvC complex processes Holliday junction (HJ) DNA during genetic recombination and DNA repair, while the RuvA-RuvB complex plays an important role in the rescue of blocked DNA replication forks via replication fork reversal (RFR). RuvA specifically binds to HJ cruciform DNA, conferring on it an open structure. The RuvB hexamer acts as an ATP-dependent pump, pulling dsDNA into and through the RuvAB complex. HJ branch migration allows RuvC to scan DNA until it finds its consensus sequence, where it cleaves and resolves the cruciform DNA. The sequence is that of Holliday junction branch migration complex subunit RuvA from Methylobacterium nodulans (strain LMG 21967 / CNCM I-2342 / ORS 2060).